Reading from the N-terminus, the 329-residue chain is NAC domain-containing protein 71 (329 aa).

One can recognise an NAC domain in the interval 9 to 166 (LPPGFRFHPT…DWVLCRIYNK (158 aa)). A disordered region spans residues 228-281 (RSGSADRDSMPRLHTDSSGSEHVLSPSPSPDDFPGGGDHDYAESQPSGGCGGWP). The span at 230–242 (GSADRDSMPRLHT) shows a compositional bias: basic and acidic residues.

In terms of assembly, interacts with NAC048 and NAC002. Expressed in roots and embryo. Weakly expressed in callus.

Its subcellular location is the nucleus. Its function is as follows. Transcription activator that binds to the promoter of the stress response gene LEA19. Involved in tolerance to abiotic stresses. The polypeptide is NAC domain-containing protein 71 (Oryza sativa subsp. japonica (Rice)).